Consider the following 194-residue polypeptide: uncharacterized protein (194 aa).

In terms of domain architecture, HTH tetR-type spans 6–66 (SGKYEKILQA…AIAENLLTHT (61 aa)). A DNA-binding region (H-T-H motif) is located at residues 29–48 (SISDIVKKAGTAQGTFYLYF).

This is an uncharacterized protein from Bacillus subtilis (strain 168).